We begin with the raw amino-acid sequence, 379 residues long: Carbamoyl phosphate synthase small chain (379 aa).

Residues 1-184 are CPSase; sequence MVSLYLENGL…LDYKPFDEKN (184 aa). L-glutamine contacts are provided by serine 44, glycine 240, and glycine 242. Residues 188-378 enclose the Glutamine amidotransferase type-1 domain; that stretch reads TIAVLDFGAK…VKLLENFPTR (191 aa). Catalysis depends on cysteine 268, which acts as the Nucleophile. Residues leucine 269, glutamine 272, asparagine 310, and tyrosine 313 each contribute to the L-glutamine site. Active-site residues include histidine 351 and glutamate 353.

The protein belongs to the CarA family. Composed of two chains; the small (or glutamine) chain promotes the hydrolysis of glutamine to ammonia, which is used by the large (or ammonia) chain to synthesize carbamoyl phosphate. Tetramer of heterodimers (alpha,beta)4.

The catalysed reaction is hydrogencarbonate + L-glutamine + 2 ATP + H2O = carbamoyl phosphate + L-glutamate + 2 ADP + phosphate + 2 H(+). It carries out the reaction L-glutamine + H2O = L-glutamate + NH4(+). It functions in the pathway amino-acid biosynthesis; L-arginine biosynthesis; carbamoyl phosphate from bicarbonate: step 1/1. It participates in pyrimidine metabolism; UMP biosynthesis via de novo pathway; (S)-dihydroorotate from bicarbonate: step 1/3. Small subunit of the glutamine-dependent carbamoyl phosphate synthetase (CPSase). CPSase catalyzes the formation of carbamoyl phosphate from the ammonia moiety of glutamine, carbonate, and phosphate donated by ATP, constituting the first step of 2 biosynthetic pathways, one leading to arginine and/or urea and the other to pyrimidine nucleotides. The small subunit (glutamine amidotransferase) binds and cleaves glutamine to supply the large subunit with the substrate ammonia. In Helicobacter acinonychis (strain Sheeba), this protein is Carbamoyl phosphate synthase small chain.